Reading from the N-terminus, the 282-residue chain is Elongation factor Ts (282 aa).

An involved in Mg(2+) ion dislocation from EF-Tu region spans residues 80-83 (TDFV).

It belongs to the EF-Ts family.

The protein localises to the cytoplasm. Its function is as follows. Associates with the EF-Tu.GDP complex and induces the exchange of GDP to GTP. It remains bound to the aminoacyl-tRNA.EF-Tu.GTP complex up to the GTP hydrolysis stage on the ribosome. This chain is Elongation factor Ts (tsf), found in Pasteurella multocida (strain Pm70).